A 183-amino-acid polypeptide reads, in one-letter code: Putative manganese efflux pump MntP 1 (183 aa).

The next 6 membrane-spanning stretches (helical) occupy residues 6–26 (LFLLALAISLDAFGVILCIGI), 36–56 (IIFVFSFGFFQFFLSFLGGYI), 64–84 (IVPIPTIVGGLIIIIVGILMI), 100–120 (IMYLILGVSVSIDALVIGFTT), 130–150 (LFMSSLFMGLIATIICSLGII), and 158–178 (ISIISSYADYIGGIILILFGL).

Belongs to the MntP (TC 9.B.29) family.

Its subcellular location is the cell membrane. Probably functions as a manganese efflux pump. This Clostridium botulinum (strain Langeland / NCTC 10281 / Type F) protein is Putative manganese efflux pump MntP 1.